The primary structure comprises 131 residues: Small ribosomal subunit protein uS9 (131 aa).

This sequence belongs to the universal ribosomal protein uS9 family.

This chain is Small ribosomal subunit protein uS9, found in Actinobacillus pleuropneumoniae serotype 5b (strain L20).